The following is a 129-amino-acid chain: 3-aminoacrylate deaminase RutC (129 aa).

The protein belongs to the RutC family.

The catalysed reaction is (Z)-3-aminoacrylate + H2O + H(+) = 3-oxopropanoate + NH4(+). Its function is as follows. Involved in pyrimidine catabolism. Catalyzes the deamination of 3-aminoacrylate to malonic semialdehyde, a reaction that can also occur spontaneously. RutC may facilitate the reaction and modulate the metabolic fitness, rather than catalyzing essential functions. This chain is 3-aminoacrylate deaminase RutC, found in Rhizobium rhizogenes (strain K84 / ATCC BAA-868) (Agrobacterium radiobacter).